The following is a 338-amino-acid chain: Methionine import ATP-binding protein MetN 2 (338 aa).

One can recognise an ABC transporter domain in the interval isoleucine 2 to valine 242. Residue glycine 39–serine 46 participates in ATP binding.

The protein belongs to the ABC transporter superfamily. Methionine importer (TC 3.A.1.24) family. In terms of assembly, the complex is composed of two ATP-binding proteins (MetN), two transmembrane proteins (MetI) and a solute-binding protein (MetQ).

The protein localises to the cell inner membrane. It catalyses the reaction L-methionine(out) + ATP + H2O = L-methionine(in) + ADP + phosphate + H(+). The enzyme catalyses D-methionine(out) + ATP + H2O = D-methionine(in) + ADP + phosphate + H(+). Its function is as follows. Part of the ABC transporter complex MetNIQ involved in methionine import. Responsible for energy coupling to the transport system. The polypeptide is Methionine import ATP-binding protein MetN 2 (Salmonella paratyphi A (strain ATCC 9150 / SARB42)).